The chain runs to 257 residues: MGYLKRFALYISVMILMFAIAGCGKGNETKEGSKETQIKKSFAKTLDMYPIKNLEDLYDKEGYRDGEFEKGDKGMWTIYTDFAKSNKPGELDDEGMVLNLDRNTRTAKGHYFVTTFYRNGKLPDEKNYKIEMKNNKIILLDEVKDDKLKQKIENFKFFGQYANLKELKKYNNGDVSINENVPSYDVEFKMSNKDENVKQLRSRYNISTEKSPILKMHIDGDLKGSSVGYRKLEIDFSKRENSKLSVIEFLSYKPAKK.

A signal peptide spans 1–22 (MGYLKRFALYISVMILMFAIAG). Cys-23 carries N-palmitoyl cysteine lipidation. Cys-23 carries the S-diacylglycerol cysteine lipid modification.

Belongs to the staphylococcal tandem lipoprotein family.

It localises to the cell membrane. This is an uncharacterized protein from Staphylococcus aureus (strain MRSA252).